A 1469-amino-acid chain; its full sequence is uncharacterized protein (1469 aa).

Residues 146-180 (GDHITPKEEEEKEKEKEKEKEKEKEKEKEKEKDSE) are compositionally biased toward basic and acidic residues. Disordered stretches follow at residues 146 to 186 (GDHI…LQEQ), 231 to 255 (IQNNQNNQNNNDSPINKEIEDDNNN), 306 to 344 (TTTTTTTTTSSSNNCTNSISNTDKSTTTNCPPVENGGDS), 430 to 455 (LNFNNNNNNNNNNNNNNNNNSQPYHY), 520 to 560 (PVKN…NNNS), 654 to 706 (TTTT…PLVR), 719 to 755 (RTQTQLQTKIQPKSPQPQPTAAPEPQKPPTPSIVKNQ), 881 to 958 (YNNI…NIIN), and 1329 to 1369 (NCSS…NSSN). Composition is skewed to low complexity over residues 232-241 (QNNQNNQNNN), 306-327 (TTTTTTTTTSSSNNCTNSISNT), 430-449 (LNFNNNNNNNNNNNNNNNNN), 523-559 (NNNNNNNNNNNNNNNNNNNNNNNNNNNNNNNNNINNN), and 654-693 (TTTTTTNTNSTNTNSTINATSPPHTPKLSSSPLLTTTTTP). Residues 719-731 (RTQTQLQTKIQPK) show a composition bias toward polar residues. The segment covering 732–749 (SPQPQPTAAPEPQKPPTP) has biased composition (pro residues). 2 stretches are compositionally biased toward low complexity: residues 1329-1347 (NCSSSSSSSESNGIDSGSE) and 1354-1369 (RSNTTNNSNNINNSSN).

This is an uncharacterized protein from Dictyostelium discoideum (Social amoeba).